Consider the following 374-residue polypeptide: UPF0754 membrane protein NWMN_1738 (374 aa).

The next 2 helical transmembrane spans lie at 4–24 and 354–374; these read LFII…TNVI and SLGF…AIFV.

It belongs to the UPF0754 family.

It localises to the cell membrane. This is UPF0754 membrane protein NWMN_1738 from Staphylococcus aureus (strain Newman).